Reading from the N-terminus, the 348-residue chain is Holliday junction branch migration complex subunit RuvB (348 aa).

A large ATPase domain (RuvB-L) region spans residues 3 to 183 (DDGLVSAAAS…FGFTAHLDFY (181 aa)). ATP contacts are provided by residues Leu22, Arg23, Gly64, Lys67, Thr68, Ser69, 130–132 (EDF), Arg173, Tyr183, and Arg220. Thr68 is a binding site for Mg(2+). The segment at 184–254 (DADELARVLT…IAQAALRIYD (71 aa)) is small ATPAse domain (RuvB-S). Residues 257-348 (GLGLDRLDRA…TQVSLFTEGE (92 aa)) are head domain (RuvB-H). DNA-binding residues include Arg312 and Arg317.

It belongs to the RuvB family. In terms of assembly, homohexamer. Forms an RuvA(8)-RuvB(12)-Holliday junction (HJ) complex. HJ DNA is sandwiched between 2 RuvA tetramers; dsDNA enters through RuvA and exits via RuvB. An RuvB hexamer assembles on each DNA strand where it exits the tetramer. Each RuvB hexamer is contacted by two RuvA subunits (via domain III) on 2 adjacent RuvB subunits; this complex drives branch migration. In the full resolvosome a probable DNA-RuvA(4)-RuvB(12)-RuvC(2) complex forms which resolves the HJ.

It localises to the cytoplasm. It carries out the reaction ATP + H2O = ADP + phosphate + H(+). Functionally, the RuvA-RuvB-RuvC complex processes Holliday junction (HJ) DNA during genetic recombination and DNA repair, while the RuvA-RuvB complex plays an important role in the rescue of blocked DNA replication forks via replication fork reversal (RFR). RuvA specifically binds to HJ cruciform DNA, conferring on it an open structure. The RuvB hexamer acts as an ATP-dependent pump, pulling dsDNA into and through the RuvAB complex. RuvB forms 2 homohexamers on either side of HJ DNA bound by 1 or 2 RuvA tetramers; 4 subunits per hexamer contact DNA at a time. Coordinated motions by a converter formed by DNA-disengaged RuvB subunits stimulates ATP hydrolysis and nucleotide exchange. Immobilization of the converter enables RuvB to convert the ATP-contained energy into a lever motion, pulling 2 nucleotides of DNA out of the RuvA tetramer per ATP hydrolyzed, thus driving DNA branch migration. The RuvB motors rotate together with the DNA substrate, which together with the progressing nucleotide cycle form the mechanistic basis for DNA recombination by continuous HJ branch migration. Branch migration allows RuvC to scan DNA until it finds its consensus sequence, where it cleaves and resolves cruciform DNA. The sequence is that of Holliday junction branch migration complex subunit RuvB from Frankia casuarinae (strain DSM 45818 / CECT 9043 / HFP020203 / CcI3).